Here is a 477-residue protein sequence, read N- to C-terminus: Nuclear receptor subfamily 6 group A member 1-A (477 aa).

Residues Q40–E115 constitute a DNA-binding region (nuclear receptor). NR C4-type zinc fingers lie at residues C43 to C63 and C79 to C98. The disordered stretch occupies residues D147–R187. A compositionally biased stretch (polar residues) spans W156–R187. An NR LBD domain is found at Q230–Y461.

Belongs to the nuclear hormone receptor family. NR6 subfamily. In terms of assembly, homodimer. Expressed in germ cells, being predominant in previtellogenic oocytes in the ovary and in spermatocytes in the testis.

The protein resides in the nucleus. Its function is as follows. Probable orphan nuclear receptor. Binds to a response element containing repeats of the motif 5'-AGGTCA-3'. The protein is Nuclear receptor subfamily 6 group A member 1-A of Danio rerio (Zebrafish).